The primary structure comprises 764 residues: 5-methyltetrahydropteroyltriglutamate--homocysteine methyltransferase (764 aa).

5-methyltetrahydropteroyltri-L-glutamate contacts are provided by residues 16–19 (RELK) and Lys115. L-homocysteine-binding positions include 435-437 (IGS) and Glu488. L-methionine contacts are provided by residues 435-437 (IGS) and Glu488. Residues 519 to 520 (RC) and Trp565 contribute to the 5-methyltetrahydropteroyltri-L-glutamate site. Asp603 is an L-homocysteine binding site. Asp603 serves as a coordination point for L-methionine. Position 609 (Glu609) interacts with 5-methyltetrahydropteroyltri-L-glutamate. Zn(2+) is bound by residues His645, Cys647, and Glu669. Residue His698 is the Proton donor of the active site. Cys730 contacts Zn(2+).

It belongs to the vitamin-B12 independent methionine synthase family. Zn(2+) is required as a cofactor.

It carries out the reaction 5-methyltetrahydropteroyltri-L-glutamate + L-homocysteine = tetrahydropteroyltri-L-glutamate + L-methionine. It participates in amino-acid biosynthesis; L-methionine biosynthesis via de novo pathway; L-methionine from L-homocysteine (MetE route): step 1/1. Catalyzes the transfer of a methyl group from 5-methyltetrahydrofolate to homocysteine resulting in methionine formation. The polypeptide is 5-methyltetrahydropteroyltriglutamate--homocysteine methyltransferase (Burkholderia pseudomallei (strain K96243)).